The primary structure comprises 563 residues: Solute carrier family 22 member 6 (563 aa).

Topologically, residues 1–9 (MAFNDLLQQ) are cytoplasmic. A helical transmembrane segment spans residues 10–30 (VGGVGRFQQIQVTLVVLPLLL). Residues 31–135 (MASHNTLQNF…LVCSHRALRQ (105 aa)) lie on the Extracellular side of the membrane. N-linked (GlcNAc...) asparagine glycans are attached at residues Asn39, Asn56, Asn92, Asn97, and Asn113. The chain crosses the membrane as a helical span at residues 136–156 (LAQSLYMVGVLLGAMVFGYLA). At 157 to 164 (DRLGRRKV) the chain is on the cytoplasmic side. The helical transmembrane segment at 165–187 (LILNYLQTAVSGTCAAFAPNFPI) threads the bilayer. At 188 to 190 (YCA) the chain is on the extracellular side. The chain crosses the membrane as a helical span at residues 191-213 (FRLLSGMALAGISLNCMTLNVEW). The Cytoplasmic segment spans residues 214–224 (MPIHTRACVGT). A helical membrane pass occupies residues 225-245 (LIGYVYSLGQFLLAGVAYAVP). The Extracellular segment spans residues 246–248 (HWR). Residues 249-269 (HLQLLVSAPFFAFFIYSWFFI) traverse the membrane as a helical segment. The Cytoplasmic portion of the chain corresponds to 270–337 (ESARWHSSSG…ELLRCPTLRH (68 aa)). The helical transmembrane segment at 338 to 358 (LFLCLSMLWFATSFAYYGLVM) threads the bilayer. The Extracellular segment spans residues 359–368 (DLQGFGVSIY). A helical membrane pass occupies residues 369–389 (LIQVIFGAVDLPAKLVGFLVI). The Cytoplasmic segment spans residues 390–395 (NSLGRR). Residues 396–416 (PAQMAALLLAGICILLNGVIP) traverse the membrane as a helical segment. At 417-425 (QDQSIVRTS) the chain is on the extracellular side. The chain crosses the membrane as a helical span at residues 426–446 (LAVLGKGCLAASFNCIFLYTG). At 447–455 (ELYPTMIRQ) the chain is on the cytoplasmic side. The helical transmembrane segment at 456 to 475 (TGMGMGSTMARVGSIVSPLV) threads the bilayer. Over 476–484 (SMTAELYPS) the chain is Extracellular. The helical transmembrane segment at 485–505 (MPLFIYGAVPVAASAVTVLLP) threads the bilayer. At 506 to 563 (ETLGQPLPDTVQDLESRWAPTQKEAGIYPRKGKQTRQQQEHQKYMVPLQASAQEKNGL) the chain is on the cytoplasmic side. The segment at 525-563 (PTQKEAGIYPRKGKQTRQQQEHQKYMVPLQASAQEKNGL) is disordered.

Belongs to the major facilitator (TC 2.A.1) superfamily. Organic cation transporter (TC 2.A.1.19) family. Post-translationally, glycosylated. Glycosylation at Asn-113 may occur at a secondary level. Glycosylation is necessary for proper targeting of the transporter to the plasma membrane. As to expression, strongly expressed in kidney. Expressed at lower level in liver, skeletal muscle, brain and placenta. In kidney, found at the basolateral membrane of the proximal tubule. In testis, primarily localized to the basal membrane of Sertoli cells and weakly expressed in Leydig cells and vascular endothelial cells.

The protein localises to the basolateral cell membrane. Its subcellular location is the basal cell membrane. The catalysed reaction is (6R)-L-erythro-5,6,7,8-tetrahydrobiopterin(out) + a dicarboxylate(in) = (6R)-L-erythro-5,6,7,8-tetrahydrobiopterin(in) + a dicarboxylate(out). The enzyme catalyses L-erythro-7,8-dihydrobiopterin(out) + a dicarboxylate(in) = L-erythro-7,8-dihydrobiopterin(in) + a dicarboxylate(out). It catalyses the reaction L-sepiapterin(out) + a dicarboxylate(in) = L-sepiapterin(in) + a dicarboxylate(out). It carries out the reaction prostaglandin F2alpha(out) + a dicarboxylate(in) = prostaglandin F2alpha(in) + a dicarboxylate(out). The catalysed reaction is prostaglandin E2(out) + a dicarboxylate(in) = prostaglandin E2(in) + a dicarboxylate(out). The enzyme catalyses 3',5'-cyclic AMP(out) + a dicarboxylate(in) = 3',5'-cyclic AMP(in) + a dicarboxylate(out). It catalyses the reaction 3',5'-cyclic GMP(out) + a dicarboxylate(in) = 3',5'-cyclic GMP(in) + a dicarboxylate(out). It carries out the reaction urate(out) + a dicarboxylate(in) = urate(in) + a dicarboxylate(out). The catalysed reaction is kynurenate(out) + glutarate(in) = kynurenate(in) + glutarate(out). The enzyme catalyses (indol-3-yl)acetate(out) + a dicarboxylate(in) = (indol-3-yl)acetate(in) + a dicarboxylate(out). It catalyses the reaction indoxyl sulfate(out) + a dicarboxylate(in) = indoxyl sulfate(in) + a dicarboxylate(out). It carries out the reaction N-benzoylglycine(out) + a dicarboxylate(in) = N-benzoylglycine(in) + a dicarboxylate(out). The catalysed reaction is 3-carboxy-4-methyl-5-propyl-2-furanpropanoate(out) + a dicarboxylate(in) = 3-carboxy-4-methyl-5-propyl-2-furanpropanoate(in) + a dicarboxylate(out). Its function is as follows. Secondary active transporter that functions as a Na(+)-independent organic anion (OA)/dicarboxylate antiporter where the uptake of one molecule of OA into the cell is coupled with an efflux of one molecule of intracellular dicarboxylate such as 2-oxoglutarate or glutarate. Mediates the uptake of OA across the basolateral side of proximal tubule epithelial cells, thereby contributing to the renal elimination of endogenous OA from the systemic circulation into the urine. Functions as a biopterin transporters involved in the uptake and the secretion of coenzymes tetrahydrobiopterin (BH4), dihydrobiopterin (BH2) and sepiapterin to urine, thereby determining baseline levels of blood biopterins. Transports prostaglandin E2 (PGE2) and prostaglandin F2-alpha (PGF2-alpha) and may contribute to their renal excretion. Also mediates the uptake of cyclic nucleotides such as cAMP and cGMP. Involved in the transport of neuroactive tryptophan metabolites kynurenate (KYNA) and xanthurenate (XA) and may contribute to their secretion from the brain. May transport glutamate. Also involved in the disposition of uremic toxins and potentially toxic xenobiotics by the renal organic anion secretory pathway, helping reduce their undesired toxicological effects on the body. Uremic toxins include the indoxyl sulfate (IS), hippurate/N-benzoylglycine (HA), indole acetate (IA), 3-carboxy-4- methyl-5-propyl-2-furanpropionate (CMPF) and urate. Xenobiotics include the mycotoxin ochratoxin (OTA). May also contribute to the transport of organic compounds in testes across the blood-testis-barrier. This Homo sapiens (Human) protein is Solute carrier family 22 member 6.